The primary structure comprises 632 residues: tRNA uridine 5-carboxymethylaminomethyl modification enzyme MnmG (632 aa).

15-20 (GAGHAG) is a binding site for FAD. Residues 205–231 (PRVDGNTIDYSKTQEEPGDKEPRHFSY) are disordered. The segment covering 216-228 (KTQEEPGDKEPRH) has biased composition (basic and acidic residues). Position 276–290 (276–290 (GPRYCPSIEDKVVRF)) interacts with NAD(+).

The protein belongs to the MnmG family. Homodimer. Heterotetramer of two MnmE and two MnmG subunits. FAD serves as cofactor.

It localises to the cytoplasm. Its function is as follows. NAD-binding protein involved in the addition of a carboxymethylaminomethyl (cmnm) group at the wobble position (U34) of certain tRNAs, forming tRNA-cmnm(5)s(2)U34. In Lactobacillus johnsonii (strain CNCM I-12250 / La1 / NCC 533), this protein is tRNA uridine 5-carboxymethylaminomethyl modification enzyme MnmG.